Consider the following 58-residue polypeptide: Sperm histone P2b (58 aa).

The interval 20–41 is disordered; it reads LRRRRYRSSRRRRRRPCRRRRH.

The protein belongs to the protamine P2 family. As to expression, testis.

The protein resides in the nucleus. It localises to the chromosome. Protamines substitute for histones in the chromatin of sperm during the haploid phase of spermatogenesis. They compact sperm DNA into a highly condensed, stable and inactive complex. The chain is Sperm histone P2b from Equus caballus (Horse).